A 402-amino-acid chain; its full sequence is Multidrug resistance protein MdtH (402 aa).

The Cytoplasmic portion of the chain corresponds to 1 to 12 (MSRVSQARNLGK). Residues 13–33 (YFLLIDNMLVVLGFFVVFPLI) form a helical membrane-spanning segment. The Periplasmic portion of the chain corresponds to 34–98 (SIRFVDQMGW…GFATMGIAHE (65 aa)). A helical membrane pass occupies residues 99 to 116 (PWLLWFSCFLSGLGGTLF). Over 117-138 (DPPRSALVVKLIRPEQRGRFFS) the chain is Cytoplasmic. Residues 139–159 (LLMMQDSAGAVIGALLGSWLL) traverse the membrane as a helical segment. Over 160 to 164 (QYDFR) the chain is Periplasmic. Residues 165 to 185 (LVCATGAILFILCALFNAWLL) traverse the membrane as a helical segment. Residues 186–213 (PAWKLSTARTPVREGMRRVMSNKRFVTY) lie on the Cytoplasmic side of the membrane. Residues 214-234 (VLTLAGYYMLAVQVMLMLPIM) traverse the membrane as a helical segment. Over 235-243 (VNDIAGSPA) the chain is Periplasmic. The chain crosses the membrane as a helical span at residues 244-264 (AVKWMYAIEACLSLTLLYPIA). Residues 265–276 (RWSEKRFRLEHR) lie on the Cytoplasmic side of the membrane. Residues 277 to 297 (LMAGLLVMSLSMLPIGMVGNL) traverse the membrane as a helical segment. The Periplasmic segment spans residues 298–299 (QQ). A helical membrane pass occupies residues 300-320 (LFTLICAFYIGSVIAEPARET). The Cytoplasmic segment spans residues 321–339 (LSASPADARARGSYMGFSR). The chain crosses the membrane as a helical span at residues 340–360 (LGLAIGGAISYIGGGWLFDMG). Residues 361-367 (KALAQPE) are Periplasmic-facing. Residues 368-388 (LPWMMLGIIGFITFLALGWQF) traverse the membrane as a helical segment. Residues 389–402 (SHKRTPRRMLEPGA) are Cytoplasmic-facing.

Belongs to the major facilitator superfamily. DHA1 family. MdtH (TC 2.A.1.2.21) subfamily.

It is found in the cell inner membrane. In Salmonella typhi, this protein is Multidrug resistance protein MdtH.